The chain runs to 217 residues: Small ribosomal subunit protein uS3 (217 aa).

One can recognise a KH type-2 domain in the interval 38-106 (IRKYIEQRLA…RVHINIIEIK (69 aa)).

It belongs to the universal ribosomal protein uS3 family. Part of the 30S ribosomal subunit. Forms a tight complex with proteins S10 and S14.

Binds the lower part of the 30S subunit head. Binds mRNA in the 70S ribosome, positioning it for translation. The chain is Small ribosomal subunit protein uS3 from Lactiplantibacillus plantarum (strain ATCC BAA-793 / NCIMB 8826 / WCFS1) (Lactobacillus plantarum).